Consider the following 835-residue polypeptide: Ubiquitin carboxyl-terminal hydrolase 26 (835 aa).

The segment at 102–128 is disordered; sequence SQGSIRPARSDERCGEPSTSAQELNGS. Polar residues predominate over residues 118–128; the sequence is PSTSAQELNGS. Positions 286-816 constitute a USP domain; that stretch reads QGLPNVGNTC…TGYVFFYMHN (531 aa). The active-site Nucleophile is the Cys295. A disordered region spans residues 597–747; it reads NRESEAQSGK…TRKVDPTKLN (151 aa). Basic and acidic residues-rich tracts occupy residues 634–652 and 669–679; these read LTKE…RPSD and KCNEGRSDKQI. Residues 683–708 are compositionally biased toward polar residues; sequence ALTQSRPKPISQEQTENLGKTTLSHT. Residues 709-725 are compositionally biased toward low complexity; sequence QDSSQSSQSSSDSSKSS. Residues 726–747 are compositionally biased toward basic and acidic residues; that stretch reads RCSDDLDKKAKPTRKVDPTKLN. Residue His771 is the Proton acceptor of the active site.

It belongs to the peptidase C19 family. In terms of assembly, interacts with RING1.

Its subcellular location is the nucleus. The protein resides in the cytoplasm. It is found in the cytoskeleton. It localises to the flagellum axoneme. The enzyme catalyses Thiol-dependent hydrolysis of ester, thioester, amide, peptide and isopeptide bonds formed by the C-terminal Gly of ubiquitin (a 76-residue protein attached to proteins as an intracellular targeting signal).. Deubiquitinase regulating several biological processes through the deubiquitination of components of these processes. Involved in somatic cell reprogramming through the 'Lys-48'-linked deubiquitination and stabilization of CBX4 and CBX6, two components of the polycomb-repressive complex 1 (PRC1). Also deubiquitinates and probably stabilizes the androgen receptor (AR), regulating the androgen receptor signaling pathway. May play a role in spermatogenesis. The polypeptide is Ubiquitin carboxyl-terminal hydrolase 26 (Mus musculus (Mouse)).